Consider the following 43-residue polypeptide: SCAGSCKCKNCRCRSCRKSCCSCCPAGCNNCAKGCVCKEPASS.

The tract at residues 1–16 is beta; it reads SCAGSCKCKNCRCRSC. A divalent metal cation contacts are provided by cysteine 2, cysteine 6, cysteine 8, cysteine 11, cysteine 13, cysteine 16, cysteine 20, cysteine 21, cysteine 23, cysteine 24, cysteine 28, cysteine 31, cysteine 35, and cysteine 37. The interval 17–43 is alpha; the sequence is RKSCCSCCPAGCNNCAKGCVCKEPASS.

It belongs to the metallothionein superfamily. Type 1 family.

Metallothioneins have a high content of cysteine residues that bind various heavy metals. In Colinus virginianus (Northern bobwhite), this protein is Metallothionein A.